Here is a 503-residue protein sequence, read N- to C-terminus: Ent-kaurene oxidase-like 5 (503 aa).

The helical transmembrane segment at 8–28 (GAGGIGVAAAAAVVAATLAVV) threads the bilayer. C448 serves as a coordination point for heme.

Belongs to the cytochrome P450 family. Requires heme as cofactor. Expressed in roots.

The protein resides in the membrane. May hydroxylate diterpenes. This chain is Ent-kaurene oxidase-like 5, found in Oryza sativa subsp. japonica (Rice).